The primary structure comprises 467 residues: MTTDTRLEYDSLGAVEVPADCYWGAQTARSLKHFAIGSQRMPLAVIHAMARLKKAAAIANRDLGVLDPEKAKWIIQAADEVIAGQWDDQFPLAIWQTGSGTQTNMNVNEVIANRAIELAGGVKGSKSPIHPNDHVNCSQSSNDTFPTAMHVATVLALQERLLPTLRHLLTVLQEKAAAFAEIIKIGRTHLMDAVPLTLGQEFSGYASQIAAAQAHIEYALQHLYPLAIGATAVGTGLNAPAGFGDRVAAELAQMTGYPFRKAENPFAALAAHDPLVMLSGALKTLAAALMKIANDIRWLGSGPRCGLGELRLPANEPGSSIMPGKVNPTQCEALTMVCVQVMGNDAAVGIAGSQGNFELNVYKPLIIYNVLQSIALLSDAAQSFTDHCLVGVEPNRQQIQAYVERSLMLVTALNPHIGYDKAAAVAKKAYSEGKTLKEAAVELGYLTAEEFDRWVRLELMLGEKGTS.

Substrate-binding positions include 99 to 101 (SGT), 130 to 133 (HPND), 140 to 142 (SSN), and threonine 188. Residue histidine 189 is the Proton donor/acceptor of the active site. Residue serine 319 is part of the active site. Residues serine 320 and 325–327 (KVN) contribute to the substrate site.

This sequence belongs to the class-II fumarase/aspartase family. Fumarase subfamily. In terms of assembly, homotetramer.

The protein resides in the cytoplasm. It catalyses the reaction (S)-malate = fumarate + H2O. It participates in carbohydrate metabolism; tricarboxylic acid cycle; (S)-malate from fumarate: step 1/1. Functionally, involved in the TCA cycle. Catalyzes the stereospecific interconversion of fumarate to L-malate. This is Fumarate hydratase class II from Thermosynechococcus vestitus (strain NIES-2133 / IAM M-273 / BP-1).